The sequence spans 633 residues: Molybdenum cofactor biosynthesis protein 1 (633 aa).

The segment at 1–380 (MAAQPVSRVV…QMKNRPMILI (380 aa)) is molybdenum cofactor biosynthesis protein A. A Phosphoserine modification is found at serine 61. Residues 61-295 (SFGRHHSYLR…AKAFKIPGFR (235 aa)) enclose the Radical SAM core domain. Arginine 70 contacts GTP. Positions 77 and 81 each coordinate [4Fe-4S] cluster. An S-adenosyl-L-methionine-binding site is contributed by tyrosine 83. Cysteine 84 is a [4Fe-4S] cluster binding site. Arginine 120 contributes to the GTP binding site. Glycine 124 lines the S-adenosyl-L-methionine pocket. Position 151 (threonine 151) interacts with GTP. Residue serine 175 participates in S-adenosyl-L-methionine binding. At lysine 195 the chain carries N6-acetyllysine. Lysine 212 is a binding site for GTP. Residue methionine 246 participates in S-adenosyl-L-methionine binding. Cysteine 309 and cysteine 312 together coordinate [4Fe-4S] cluster. 314–316 (RLR) provides a ligand contact to GTP. Cysteine 326 is a [4Fe-4S] cluster binding site. The interval 410 to 633 (VSFSSQMVTL…GGQRGDFHRT (224 aa)) is molybdenum cofactor biosynthesis protein C. Residues 446–480 (SSHLDSDANPKCLSPTEPQAPAASSGPLPDSDQLT) form a disordered region. Lysine 525 is subject to N6-acetyllysine. Aspartate 603 (for molybdenum cofactor biosynthesis protein C activity) is an active-site residue.

In the C-terminal section; belongs to the MoaC family. It in the N-terminal section; belongs to the radical SAM superfamily. MoaA family. As to quaternary structure, isoform MOCS1A and isoform MOCS1B probably form a heterooligomer. Requires [4Fe-4S] cluster as cofactor.

The enzyme catalyses GTP + AH2 + S-adenosyl-L-methionine = (8S)-3',8-cyclo-7,8-dihydroguanosine 5'-triphosphate + 5'-deoxyadenosine + L-methionine + A + H(+). It catalyses the reaction (8S)-3',8-cyclo-7,8-dihydroguanosine 5'-triphosphate = cyclic pyranopterin phosphate + diphosphate. Its pathway is cofactor biosynthesis; molybdopterin biosynthesis. Isoform MOCS1A and isoform MOCS1B probably form a complex that catalyzes the conversion of 5'-GTP to cyclic pyranopterin monophosphate (cPMP). MOCS1A catalyzes the cyclization of GTP to (8S)-3',8-cyclo-7,8-dihydroguanosine 5'-triphosphate and MOCS1B catalyzes the subsequent conversion of (8S)-3',8-cyclo-7,8-dihydroguanosine 5'-triphosphate to cPMP. The chain is Molybdenum cofactor biosynthesis protein 1 (MOCS1) from Bos taurus (Bovine).